A 568-amino-acid chain; its full sequence is Sphingosine-1-phosphate lyase 1 (568 aa).

The Lumenal segment spans residues 1-40 (MPSTDLLMLKAFEPYLEILEVYSTKAKNYVNGHCTKYEPW). Residues 41 to 61 (QLIAWSVVWTLLIVWGYEFVF) form a helical; Signal-anchor for type III membrane protein membrane-spanning segment. Topologically, residues 62 to 568 (QPESLWSRFK…SQMNGSPKPH (507 aa)) are cytoplasmic. Lys353 is subject to N6-(pyridoxal phosphate)lysine; alternate. Lys353 is modified (N6-acetyllysine; alternate). 2 positions are modified to 3'-nitrotyrosine: Tyr356 and Tyr366. Position 564 is a phosphoserine (Ser564).

Belongs to the group II decarboxylase family. Sphingosine-1-phosphate lyase subfamily. Homodimer. Requires pyridoxal 5'-phosphate as cofactor. As to expression, ubiquitously expressed. Expressed in fetal and adult adrenal gland (at protein level).

It is found in the endoplasmic reticulum membrane. It carries out the reaction sphinganine 1-phosphate = hexadecanal + phosphoethanolamine. It catalyses the reaction sphing-4-enine 1-phosphate = (2E)-hexadecenal + phosphoethanolamine. It functions in the pathway lipid metabolism; sphingolipid metabolism. Functionally, cleaves phosphorylated sphingoid bases (PSBs), such as sphingosine-1-phosphate, into fatty aldehydes and phosphoethanolamine. Elevates stress-induced ceramide production and apoptosis. Required for global lipid homeostasis in liver and cholesterol homeostasis in fibroblasts. Involved in the regulation of pro-inflammatory response and neutrophil trafficking. Modulates neuronal autophagy via phosphoethanolamine production which regulates accumulation of aggregate-prone proteins such as APP. Seems to play a role in establishing neuronal contact sites and axonal maintenance. This is Sphingosine-1-phosphate lyase 1 from Homo sapiens (Human).